The primary structure comprises 1479 residues: C-type mannose receptor 2 (1479 aa).

A signal peptide spans 1–30 (MVPIRPALAPWPRHLLRCVLLLGGLRLGHP). At 31–1413 (ADSAAALLEP…SAALPESPVA (1383 aa)) the chain is on the extracellular side. One can recognise a Ricin B-type lectin domain in the interval 37–190 (LLEPDVFLIF…SHGKPCTIPF (154 aa)). A disulfide bridge connects residues Cys-92 and Cys-111. N-linked (GlcNAc...) asparagine glycans are attached at residues Asn-101 and Asn-139. Residues 181-229 (SHGKPCTIPFKYDNQWFHGCTSTGREDGHLWCATTQDYGKDERWGFCPI) form the Fibronectin type-II domain. 4 disulfides stabilise this stretch: Cys-186-Cys-212, Cys-200-Cys-227, Cys-265-Cys-358, and Cys-334-Cys-350. One can recognise a C-type lectin 1 domain in the interval 243 to 359 (LTDSCYQFNF…CSIALPYVCK (117 aa)). Asn-363 carries N-linked (GlcNAc...) asparagine glycosylation. C-type lectin domains follow at residues 388 to 504 (FQGH…SICK), 527 to 643 (HSPS…RYIC), 677 to 808 (KLRH…WICK), 831 to 950 (FQEA…YICK), 978 to 1106 (FLNK…GFIC), 1131 to 1242 (YLNH…GAVC), and 1271 to 1391 (FREH…GVVC). 7 disulfides stabilise this stretch: Cys-409/Cys-503, Cys-480/Cys-495, Cys-617/Cys-634, Cys-703/Cys-807, Cys-784/Cys-799, Cys-852/Cys-949, and Cys-926/Cys-941. The N-linked (GlcNAc...) asparagine glycan is linked to Asn-1028. A disulfide bridge connects residues Cys-1077 and Cys-1097. Lys-1141 participates in a covalent cross-link: Glycyl lysine isopeptide (Lys-Gly) (interchain with G-Cter in SUMO1). A disulfide bridge links Cys-1219 with Cys-1233. N-linked (GlcNAc...) asparagine glycosylation occurs at Asn-1348. Cys-1367 and Cys-1382 are joined by a disulfide. The helical transmembrane segment at 1414–1434 (LVVVLTAVLLLLALMTAALIL) threads the bilayer. At 1435-1479 (YRRRQSAERGSFEGARYSRSSHSGPAEATEKNILVSDMEMNEQQE) the chain is on the cytoplasmic side. A disordered region spans residues 1446-1479 (FEGARYSRSSHSGPAEATEKNILVSDMEMNEQQE).

As to quaternary structure, interacts directly with PLAUR/UPAR and PLAU/pro-UPA to form a tri-molecular complex. Interacts with collagen V and with C-terminal region of type I collagen/COL1A1. In terms of processing, phosphorylated. In terms of tissue distribution, highly expressed in heart, lung and kidney, but little or no expression in brain, thymus or adult liver. Expressed at highly endothelialized sites such as those in choroid plexus and kidney glomerulai as well as in chondrocytes in cartilaginous regions of the embryo.

It is found in the membrane. Functionally, may play a role as endocytotic lectin receptor displaying calcium-dependent lectin activity. Internalizes glycosylated ligands from the extracellular space for release in an endosomal compartment via clathrin-mediated endocytosis. May be involved in plasminogen activation system controlling the extracellular level of PLAUR/PLAU, and thus may regulate protease activity at the cell surface. May contribute to cellular uptake, remodeling and degradation of extracellular collagen matrices. May participate in remodeling of extracellular matrix cooperating with the matrix metalloproteinases (MMPs). The sequence is that of C-type mannose receptor 2 (Mrc2) from Mus musculus (Mouse).